The sequence spans 89 residues: Putative regulatory protein CYB_0055 (89 aa).

This sequence belongs to the RemA family.

This is Putative regulatory protein CYB_0055 from Synechococcus sp. (strain JA-2-3B'a(2-13)) (Cyanobacteria bacterium Yellowstone B-Prime).